We begin with the raw amino-acid sequence, 341 residues long: Glucokinase (341 aa).

ATP is bound at residue G18–T23.

The protein belongs to the bacterial glucokinase family.

The protein resides in the cytoplasm. The enzyme catalyses D-glucose + ATP = D-glucose 6-phosphate + ADP + H(+). The sequence is that of Glucokinase from Rhizobium etli (strain CIAT 652).